The sequence spans 149 residues: Urease accessory protein UreE (149 aa).

It belongs to the UreE family.

Its subcellular location is the cytoplasm. Functionally, involved in urease metallocenter assembly. Binds nickel. Probably functions as a nickel donor during metallocenter assembly. This chain is Urease accessory protein UreE, found in Synechococcus sp. (strain JA-3-3Ab) (Cyanobacteria bacterium Yellowstone A-Prime).